We begin with the raw amino-acid sequence, 44 residues long: MKRTFQPKNLIRKRRHGFRSRMATRAGRKILNRRRSLGCKKLCA.

This sequence belongs to the bacterial ribosomal protein bL34 family.

The protein is Large ribosomal subunit protein bL34 of Wolbachia sp. subsp. Brugia malayi (strain TRS).